Reading from the N-terminus, the 758-residue chain is Amyloid beta precursor protein binding family B member 2 (758 aa).

S123 carries the phosphoserine modification. The disordered stretch occupies residues 134 to 154; the sequence is KLEGKEPHPQDSSSCEILPSQ. Phosphoserine is present on S160. Residues 176-190 are compositionally biased toward basic and acidic residues; it reads EQNRGNHHGTAEEKS. Disordered stretches follow at residues 176 to 195, 206 to 295, and 326 to 351; these read EQNR…PVQG, LLLQ…LPPG, and DLQG…KQPW. Composition is skewed to polar residues over residues 212–230 and 261–275; these read NRPQ…SSSP and SWTT…PSSP. One can recognise a WW domain in the interval 290–322; that stretch reads PDLPPGWKRVSDIAGTYYWHIPTGTTQWERPVS. Positions 331–340 are enriched in polar residues; sequence RKGSLSSVTP. Phosphoserine is present on residues S334, S409, and S412. PID domains lie at 413–578 and 584–736; these read DPEA…LQVD and TELV…VTTN.

As to quaternary structure, interacts (via C-terminus) with APP (via C-terminus). Interacts with APLP2 (via cytoplasmic domain). Widely expressed.

The protein localises to the endoplasmic reticulum. Its subcellular location is the golgi apparatus. It is found in the early endosome. Plays a role in the maintenance of lens transparency, and may also play a role in muscle cell strength. Involved in hippocampal neurite branching and neuromuscular junction formation, as a result plays a role in spatial memory functioning. Activates transcription of APP. The protein is Amyloid beta precursor protein binding family B member 2 of Homo sapiens (Human).